The sequence spans 175 residues: ATP-dependent protease subunit HslV (175 aa).

T2 is a catalytic residue. The Na(+) site is built by A156, C159, and T162.

It belongs to the peptidase T1B family. HslV subfamily. A double ring-shaped homohexamer of HslV is capped on each side by a ring-shaped HslU homohexamer. The assembly of the HslU/HslV complex is dependent on binding of ATP.

Its subcellular location is the cytoplasm. It carries out the reaction ATP-dependent cleavage of peptide bonds with broad specificity.. With respect to regulation, allosterically activated by HslU binding. Functionally, protease subunit of a proteasome-like degradation complex believed to be a general protein degrading machinery. The protein is ATP-dependent protease subunit HslV of Rhizobium rhizogenes (strain K84 / ATCC BAA-868) (Agrobacterium radiobacter).